The following is a 208-amino-acid chain: Thymidylate kinase (208 aa).

Residue 10–17 participates in ATP binding; sequence GIDGSGKS.

It belongs to the thymidylate kinase family.

It catalyses the reaction dTMP + ATP = dTDP + ADP. In terms of biological role, phosphorylation of dTMP to form dTDP in both de novo and salvage pathways of dTTP synthesis. This chain is Thymidylate kinase, found in Jannaschia sp. (strain CCS1).